Reading from the N-terminus, the 71-residue chain is Disintegrin ussuristatin-2 (71 aa).

Residues 1-71 enclose the Disintegrin domain; that stretch reads EAGEECDCGA…QSADCPRNGF (71 aa). 6 disulfides stabilise this stretch: C6-C21, C8-C16, C15-C38, C29-C35, C34-C59, and C47-C66. Positions 51–53 match the Cell attachment site; atypical (KGD) motif; the sequence is KGD.

The protein belongs to the venom metalloproteinase (M12B) family. P-II subfamily. P-IId sub-subfamily. As to quaternary structure, homodimer. Expressed by the venom gland.

It localises to the secreted. In terms of biological role, suppress platelet aggregation induced by ADP, collagen, thrombin, and epinephrine (IC(50)=170-330 nM). Also dose-dependently inhibits the adhesion of human melanoma cells to fibrinogen but not to fibronectin. This is Disintegrin ussuristatin-2 from Gloydius ussuriensis (Ussuri mamushi).